The following is a 120-amino-acid chain: Large ribosomal subunit protein uL18 (120 aa).

It belongs to the universal ribosomal protein uL18 family. Part of the 50S ribosomal subunit; part of the 5S rRNA/L5/L18/L25 subcomplex. Contacts the 5S and 23S rRNAs.

In terms of biological role, this is one of the proteins that bind and probably mediate the attachment of the 5S RNA into the large ribosomal subunit, where it forms part of the central protuberance. This Rhodopseudomonas palustris (strain BisA53) protein is Large ribosomal subunit protein uL18.